The following is a 385-amino-acid chain: uncharacterized protein (385 aa).

N6-(pyridoxal phosphate)lysine is present on K194.

It belongs to the class-V pyridoxal-phosphate-dependent aminotransferase family. Requires pyridoxal 5'-phosphate as cofactor.

This is an uncharacterized protein from Methanocaldococcus jannaschii (strain ATCC 43067 / DSM 2661 / JAL-1 / JCM 10045 / NBRC 100440) (Methanococcus jannaschii).